A 419-amino-acid polypeptide reads, in one-letter code: Farnesyl pyrophosphate synthase (419 aa).

N-acetylmethionine is present on Met-1. Isopentenyl diphosphate contacts are provided by Lys-123, Arg-126, and Gln-162. Lys-123 is subject to N6-(2-hydroxyisobutyryl)lysine; alternate. An N6-acetyllysine; alternate modification is found at Lys-123. Asp-169 and Asp-173 together coordinate Mg(2+). Arg-178 lines the dimethylallyl diphosphate pocket. Arg-179 contributes to the isopentenyl diphosphate binding site. Dimethylallyl diphosphate contacts are provided by Lys-266, Thr-267, Gln-306, Lys-323, and Lys-332. Lys-353 is modified (N6-acetyllysine).

It belongs to the FPP/GGPP synthase family. As to quaternary structure, homodimer. Interacts with RSAD2. (Microbial infection) Interacts with HTLV-1 protein p13(II). Requires Mg(2+) as cofactor.

It localises to the cytoplasm. The enzyme catalyses isopentenyl diphosphate + dimethylallyl diphosphate = (2E)-geranyl diphosphate + diphosphate. The catalysed reaction is isopentenyl diphosphate + (2E)-geranyl diphosphate = (2E,6E)-farnesyl diphosphate + diphosphate. It functions in the pathway isoprenoid biosynthesis; farnesyl diphosphate biosynthesis; farnesyl diphosphate from geranyl diphosphate and isopentenyl diphosphate: step 1/1. It participates in isoprenoid biosynthesis; geranyl diphosphate biosynthesis; geranyl diphosphate from dimethylallyl diphosphate and isopentenyl diphosphate: step 1/1. Inactivated by interferon-induced RSAD2. This inactivation may result of disruption of lipid rafts at the plasma membrane, and thus have an antiviral effect since many enveloped viruses need lipid rafts to bud efficiently out of the cell. In terms of biological role, key enzyme in isoprenoid biosynthesis which catalyzes the formation of farnesyl diphosphate (FPP), a precursor for several classes of essential metabolites including sterols, dolichols, carotenoids, and ubiquinones. FPP also serves as substrate for protein farnesylation and geranylgeranylation. Catalyzes the sequential condensation of isopentenyl pyrophosphate with the allylic pyrophosphates, dimethylallyl pyrophosphate, and then with the resultant geranylpyrophosphate to the ultimate product farnesyl pyrophosphate. This chain is Farnesyl pyrophosphate synthase, found in Homo sapiens (Human).